A 496-amino-acid polypeptide reads, in one-letter code: E3 ubiquitin-protein ligase Hakai (496 aa).

Residues 35-60 form a disordered region; sequence PNKIKPAPRPQRNMNRIPTKPQPGFD. The segment at 104-144 adopts an RING-type; degenerate zinc-finger fold; sequence CDKCGLPIKIYGRMIPCKHVFCYDCALMHEKKADKLCPGTL. An HYB domain region spans residues 157–215; sequence CNDPVQRIEQCARGSLFMCSIVQGCKRTYLSQRDLQAHINHRHMRASKPTARPQPEPIH. The segment at 173 to 199 adopts a C2H2-type zinc-finger fold; that stretch reads FMCSIVQGCKRTYLSQRDLQAHINHRH. The segment covering 304-314 has biased composition (polar residues); sequence VPIQDDSNSGA. The segment at 304–496 is disordered; that stretch reads VPIQDDSNSG…DQARYRPYYQ (193 aa). Composition is skewed to pro residues over residues 350–360, 380–397, and 407–430; these read APPPPPPPPIS, GPPP…PPPG, and MNHP…PPHH. Residues 434 to 449 show a composition bias toward polar residues; it reads SSMPQFNEDQGTLSPP. Positions 464-483 are enriched in pro residues; that stretch reads PRGPPPRMQGPPSQAPMPGP.

This sequence belongs to the Hakai family. As to quaternary structure, homodimer. Interacts with tyrosine-phosphorylated SRC substrates. Component of the WMM complex, a N6-methyltransferase complex composed of a catalytic subcomplex, named MAC, and of an associated subcomplex, named MACOM. Component of the MACOM subcomplex.

Its subcellular location is the nucleus speckle. It localises to the nucleus. The protein resides in the nucleoplasm. It catalyses the reaction S-ubiquitinyl-[E2 ubiquitin-conjugating enzyme]-L-cysteine + [acceptor protein]-L-lysine = [E2 ubiquitin-conjugating enzyme]-L-cysteine + N(6)-ubiquitinyl-[acceptor protein]-L-lysine.. The protein operates within protein modification; protein ubiquitination. In terms of biological role, E3 ubiquitin-protein ligase that mediates ubiquitination of several tyrosine-phosphorylated Src substrates. Associated component of the WMM complex, a complex that mediates N6-methyladenosine (m6A) methylation of RNAs, a modification that plays a role in the efficiency of mRNA splicing and RNA processing. The protein is E3 ubiquitin-protein ligase Hakai of Xenopus laevis (African clawed frog).